Reading from the N-terminus, the 90-residue chain is Cell division topological specificity factor (90 aa).

Residues 1 to 21 (MAGFWSKIFGNDEKPSSAQTA) form a disordered region. Basic and acidic residues predominate over residues 10–21 (GNDEKPSSAQTA).

Belongs to the MinE family.

In terms of biological role, prevents the cell division inhibition by proteins MinC and MinD at internal division sites while permitting inhibition at polar sites. This ensures cell division at the proper site by restricting the formation of a division septum at the midpoint of the long axis of the cell. The protein is Cell division topological specificity factor of Acinetobacter baylyi (strain ATCC 33305 / BD413 / ADP1).